A 650-amino-acid polypeptide reads, in one-letter code: DNA-directed RNA polymerase III subunit rpc3 (650 aa).

Disordered stretches follow at residues 133 to 163, 264 to 283, 288 to 313, and 400 to 440; these read PTAV…EGHT, RGAK…KKAR, AVDE…NIPM, and LAGS…SSDG. A compositionally biased stretch (acidic residues) spans 149-158; it reads GEGVEGEGIE. The segment covering 288-307 has biased composition (acidic residues); the sequence is AVDEDEEEEEENEWSEDEMG. A leucine-zipper region spans residues 577-598; the sequence is TYKSMSRCLQRLRFERNRLKEF.

It belongs to the RNA polymerase beta chain family. In terms of assembly, component of the RNA polymerase III (Pol III) complex consisting of 17 subunits.

The protein resides in the nucleus. DNA-dependent RNA polymerase catalyzes the transcription of DNA into RNA using the four ribonucleoside triphosphates as substrates. Specific core component of RNA polymerase III which synthesizes small RNAs, such as 5S rRNA and tRNAs. This is DNA-directed RNA polymerase III subunit rpc3 (rpc82) from Aspergillus terreus (strain NIH 2624 / FGSC A1156).